The following is a 910-amino-acid chain: Eukaryotic translation initiation factor 3 subunit C (910 aa).

Positions 1-21 (MSRFFANGSESESESSEEEIQ) are disordered. The span at 11–20 (SESESSEEEI) shows a compositional bias: acidic residues. Phosphoserine is present on residues Ser-34, Ser-165, Ser-176, and Ser-185. Residues 157-281 (FREAPDQESE…KRAEDDEDGE (125 aa)) form a disordered region. Over residues 162 to 186 (DQESEAEDEVVALESDGGDAGDDSD) the composition is skewed to acidic residues. The segment covering 193-207 (EAAPKAVKSAPAKAA) has biased composition (low complexity). Residues 209 to 235 (ADDDDSDDSIDWDSDSESETESSDDEN) show a composition bias toward acidic residues. Over residues 240-268 (MRERFLKRTTEKEEKDDDKRKDKRKEQKT) the composition is skewed to basic and acidic residues. A PCI domain is found at 639-815 (FHMHINLELL…ETVGMHRSEP (177 aa)). The interval 847-910 (FFQRGNMGNR…QQQVQTIDEE (64 aa)) is disordered. A compositionally biased stretch (low complexity) spans 862 to 874 (NRNQNNQGGNWLG). Basic residues predominate over residues 882–891 (RNRNQRGHHK). Low complexity predominate over residues 895-910 (DRQQQQQQQVQTIDEE).

The protein belongs to the eIF-3 subunit C family. Component of the eukaryotic translation initiation factor 3 (eIF-3) complex. The eIF-3 complex interacts with pix.

The protein localises to the cytoplasm. Its function is as follows. Component of the eukaryotic translation initiation factor 3 (eIF-3) complex, which is involved in protein synthesis of a specialized repertoire of mRNAs and, together with other initiation factors, stimulates binding of mRNA and methionyl-tRNAi to the 40S ribosome. The eIF-3 complex specifically targets and initiates translation of a subset of mRNAs involved in cell proliferation. This chain is Eukaryotic translation initiation factor 3 subunit C, found in Drosophila sechellia (Fruit fly).